The following is a 1657-amino-acid chain: Androglobin (1657 aa).

Basic residues predominate over residues 1-11 (MASKQAKRKEV). Disordered stretches follow at residues 1–40 (MASKQAKRKEVHRINSAHGSDKSKDLYHFGSNVPPGSFEQ) and 321–398 (TKEN…SSDV). The Calpain catalytic domain occupies 70–402 (KDKTAKSPIF…RPSSDVQYSM (333 aa)). Positions 321-386 (TKENKDGKDG…DGEKEKEKFK (66 aa)) are enriched in basic and acidic residues. One can recognise a Globin; C-terminal part domain in the interval 762–889 (HVCSMTTFVI…EDVSLAEWVD (128 aa)). 2 residues coordinate heme b: Gln-791 and His-823. One can recognise an IQ domain in the interval 905–934 (EIAAAVKIQSMWKGCYVRLLMKARKPETKE). The Globin; N-terminal part domain occupies 935 to 967 (NVTVADTLQKIWAVLEMNLEQYALSLLRLMFKS). 4 disordered regions span residues 1184 to 1226 (SKQV…TDTG), 1288 to 1356 (KHEE…QEDP), 1422 to 1459 (TTDTTTSAPSPETLSVSQSQTKSSEEGELDTGKYADIK), and 1638 to 1657 (IEKKSPASDSQKKKKVGKKK). The span at 1321–1336 (EKSAEKEKLAKEKQAP) shows a compositional bias: basic and acidic residues. 2 stretches are compositionally biased toward polar residues: residues 1341 to 1351 (QQVQMPTAVHS) and 1422 to 1443 (TTDTTTSAPSPETLSVSQSQTK). Residues 1585–1640 (DEVLEMYGEMRDSVDEARQKILDIREVYRNKLLEAERLRMEALAAQEAAVKIEIEK) adopt a coiled-coil conformation.

In the central section; belongs to the globin family. The protein in the N-terminal section; belongs to the peptidase C2 family. In terms of assembly, interacts with septin SEPT10; contributes to in vitro proteolytic cleavage of SEPT10 in a calmodulin-dependent manner. Interacts with CFAP69. Interacts with SPEF2. May interact with calmodulin. In terms of tissue distribution, strongly expressed in testis and lung. Weakly expressed in heart, brain, spleen, kidney and tongue.

The protein resides in the cell projection. Its subcellular location is the cilium. It localises to the flagellum. Functionally, probable chimeric globin with a bis-histidyl six-coordinate heme-iron atom through which it could bind dioxygen, carbon monoxide and nitric oxide. Required for sperm flagellum formation and maturation of elongating spermatids, thus playing an essential role in male fertility. The polypeptide is Androglobin (Mus musculus (Mouse)).